We begin with the raw amino-acid sequence, 122 residues long: Large ribosomal subunit protein uL14 (122 aa).

Belongs to the universal ribosomal protein uL14 family. As to quaternary structure, part of the 50S ribosomal subunit. Forms a cluster with proteins L3 and L19. In the 70S ribosome, L14 and L19 interact and together make contacts with the 16S rRNA in bridges B5 and B8.

In terms of biological role, binds to 23S rRNA. Forms part of two intersubunit bridges in the 70S ribosome. The sequence is that of Large ribosomal subunit protein uL14 from Rhodopseudomonas palustris (strain HaA2).